The primary structure comprises 82 residues: Polyketide biosynthesis acyl-carrier-protein AcpK (82 aa).

A Carrier domain is found at 4–79; sequence QRIFEVLITN…ELAEVLYDKV (76 aa). S39 is subject to O-(pantetheine 4'-phosphoryl)serine.

In terms of processing, 4'-phosphopantetheine is transferred from CoA to a specific serine of apo-ACP by sfp.

The protein resides in the cytoplasm. It functions in the pathway antibiotic biosynthesis; bacillaene biosynthesis. Functionally, involved in some intermediate steps for the synthesis of the antibiotic polyketide bacillaene which is involved in secondary metabolism. The protein is Polyketide biosynthesis acyl-carrier-protein AcpK (acpK) of Bacillus subtilis (strain 168).